A 430-amino-acid chain; its full sequence is Histidinol dehydrogenase (430 aa).

Residues Tyr130, Gln191, and Asn214 each contribute to the NAD(+) site. 3 residues coordinate substrate: Ser237, Gln259, and His262. The Zn(2+) site is built by Gln259 and His262. Residues Glu327 and His328 each act as proton acceptor in the active site. His328, Asp361, Glu415, and His420 together coordinate substrate. Asp361 is a binding site for Zn(2+). His420 lines the Zn(2+) pocket.

It belongs to the histidinol dehydrogenase family. It depends on Zn(2+) as a cofactor.

It catalyses the reaction L-histidinol + 2 NAD(+) + H2O = L-histidine + 2 NADH + 3 H(+). It functions in the pathway amino-acid biosynthesis; L-histidine biosynthesis; L-histidine from 5-phospho-alpha-D-ribose 1-diphosphate: step 9/9. Functionally, catalyzes the sequential NAD-dependent oxidations of L-histidinol to L-histidinaldehyde and then to L-histidine. This is Histidinol dehydrogenase from Brucella suis biovar 1 (strain 1330).